Consider the following 332-residue polypeptide: GTPase Obg (332 aa).

An Obg domain is found at 1 to 159 (MKFLDQAKIY…RWVWLRLKLI (159 aa)). The OBG-type G domain maps to 160–328 (ADAGLVGLPN…VLRETLRMIR (169 aa)). GTP is bound by residues 166-173 (GLPNAGKS), 191-195 (FTTLH), 213-216 (DIPG), 280-283 (NKMD), and 309-311 (SAA). S173 and T193 together coordinate Mg(2+).

It belongs to the TRAFAC class OBG-HflX-like GTPase superfamily. OBG GTPase family. Monomer. Requires Mg(2+) as cofactor.

It localises to the cytoplasm. Functionally, an essential GTPase which binds GTP, GDP and possibly (p)ppGpp with moderate affinity, with high nucleotide exchange rates and a fairly low GTP hydrolysis rate. Plays a role in control of the cell cycle, stress response, ribosome biogenesis and in those bacteria that undergo differentiation, in morphogenesis control. The chain is GTPase Obg from Acidiphilium cryptum (strain JF-5).